Reading from the N-terminus, the 709-residue chain is Elongation factor G (709 aa).

One can recognise a tr-type G domain in the interval 8-297; the sequence is ANTRNIGIMA…AVIDYLPSPL (290 aa). GTP contacts are provided by residues 17 to 24, 81 to 85, and 135 to 138; these read AHVDAGKT, DTPGH, and NKMD.

It belongs to the TRAFAC class translation factor GTPase superfamily. Classic translation factor GTPase family. EF-G/EF-2 subfamily.

It is found in the cytoplasm. In terms of biological role, catalyzes the GTP-dependent ribosomal translocation step during translation elongation. During this step, the ribosome changes from the pre-translocational (PRE) to the post-translocational (POST) state as the newly formed A-site-bound peptidyl-tRNA and P-site-bound deacylated tRNA move to the P and E sites, respectively. Catalyzes the coordinated movement of the two tRNA molecules, the mRNA and conformational changes in the ribosome. The polypeptide is Elongation factor G (Lactococcus lactis subsp. cremoris (strain MG1363)).